A 138-amino-acid chain; its full sequence is Large ribosomal subunit protein bL19 (138 aa).

This sequence belongs to the bacterial ribosomal protein bL19 family.

In terms of biological role, this protein is located at the 30S-50S ribosomal subunit interface and may play a role in the structure and function of the aminoacyl-tRNA binding site. This is Large ribosomal subunit protein bL19 from Rickettsia typhi (strain ATCC VR-144 / Wilmington).